The following is a 142-amino-acid chain: MTTFTAKNETVQRDWYLVDAEGKTLGRLATELARRLLGKTKPVYTTHVDTGDYLVVINAEKVVVTGKKLTDKYYHRFTGYVGNLKSESLGQALQRHPERVLEIAVKGMLPKGPLGRAMYRKLKVYTGSKHPHAAQQPQVLDI.

This sequence belongs to the universal ribosomal protein uL13 family. As to quaternary structure, part of the 50S ribosomal subunit.

This protein is one of the early assembly proteins of the 50S ribosomal subunit, although it is not seen to bind rRNA by itself. It is important during the early stages of 50S assembly. The polypeptide is Large ribosomal subunit protein uL13 (Xylella fastidiosa (strain 9a5c)).